The chain runs to 148 residues: UPF0756 membrane protein KPN78578_11500 (148 aa).

Helical transmembrane passes span 14 to 34 (ALGFISHNTTVAISILVLIIV), 51 to 71 (LTVGIIILTIGVMAPIASGTL), 86 to 106 (LLAIAVGVFVSWLGGRGVSLM), and 121 to 141 (VLGVALFRGVPVGPLIAAGII).

Belongs to the UPF0756 family.

The protein resides in the cell membrane. This Klebsiella pneumoniae subsp. pneumoniae (strain ATCC 700721 / MGH 78578) protein is UPF0756 membrane protein KPN78578_11500.